Reading from the N-terminus, the 121-residue chain is Cytochrome c2 iso-2 (121 aa).

Positions 15, 18, 19, and 98 each coordinate heme c.

It belongs to the cytochrome c family. Binds 1 heme c group covalently per subunit.

Cytochrome c2 is found mainly in purple, non-sulfur, photosynthetic bacteria where it functions as the electron donor to the oxidized bacteriochlorophyll in the photophosphorylation pathway. However, it may also have a role in the respiratory chain and is found in some non-photosynthetic bacteria. This Rhodospirillum centenum (Rhodocista centenaria) protein is Cytochrome c2 iso-2.